The chain runs to 109 residues: MARDIGLNIPAPSEECDDAYCPFHGTLPVRGQILVGTVVSSKMDNTVVIERQYMKMVSKYQRYEKRRSKIHAHNPACISAKVGDIVTIAECRPISKTKSYVVVKAEVPK.

This sequence belongs to the universal ribosomal protein uS17 family. In terms of assembly, part of the 30S ribosomal subunit.

One of the primary rRNA binding proteins, it binds specifically to the 5'-end of 16S ribosomal RNA. The polypeptide is Small ribosomal subunit protein uS17A (Methanosarcina acetivorans (strain ATCC 35395 / DSM 2834 / JCM 12185 / C2A)).